A 307-amino-acid polypeptide reads, in one-letter code: UDP-N-acetylenolpyruvoylglucosamine reductase (307 aa).

Residues 34 to 198 form the FAD-binding PCMH-type domain; sequence LGGKADVYIT…LEATFALKKA (165 aa). Arg177 is an active-site residue. The Proton donor role is filled by Ser227. Glu297 is an active-site residue.

This sequence belongs to the MurB family. Requires FAD as cofactor.

The protein localises to the cytoplasm. The catalysed reaction is UDP-N-acetyl-alpha-D-muramate + NADP(+) = UDP-N-acetyl-3-O-(1-carboxyvinyl)-alpha-D-glucosamine + NADPH + H(+). It participates in cell wall biogenesis; peptidoglycan biosynthesis. Cell wall formation. This Oceanobacillus iheyensis (strain DSM 14371 / CIP 107618 / JCM 11309 / KCTC 3954 / HTE831) protein is UDP-N-acetylenolpyruvoylglucosamine reductase.